Here is a 562-residue protein sequence, read N- to C-terminus: 2-hydroxyisobutanoyl-CoA mutase large subunit (562 aa).

(3S)-3-hydroxybutanoyl-CoA is bound by residues 76–79, 86–88, D117, 196–198, R235, N240, H245, and R284; these read YPTM, TMR, and TVQ.

It belongs to the acyl-CoA mutase large subunit family. Homotetramer composed of two large substrate-binding subunits (HcmA) and two small cobalamin-binding subunits (HcmB).

It carries out the reaction 2-hydroxyisobutanoyl-CoA = (3S)-3-hydroxybutanoyl-CoA. Functionally, together with HcmB, catalyzes the isomerization of 2-hydroxyisobutyryl-CoA and 3-hydroxybutyryl-CoA. Is specific for 2-hydroxyisobutyryl-CoA and (S)-3-hydroxybutyryl-CoA, and shows only very low activity with (R)-3-hydroxybutyryl-CoA, isobutyryl-CoA and butyryl-CoA. In vitro, can isomerize pivalyl-CoA and isovaleryl-CoA, with much lower efficiency. Plays a central role in the degradation of substrates bearing a tert-butyl moiety, such as the fuel oxygenate methyl tert-butyl ether (MTBE) and its metabolites. The protein is 2-hydroxyisobutanoyl-CoA mutase large subunit of Aquincola tertiaricarbonis.